A 169-amino-acid chain; its full sequence is MKVTAMLNPHLLDVAYNYLLLMDMDCVVQSVQWKQLSTDTYCFEPFYDSQIKWLYAPKSGQSFDSYLENYATLIRVKQVQQHRKELILHCVDFLTMKANDNFMVFKNYINMIIKVYLQFYNYRFPINFEDNTMKPCVNLTFRRGGSWKTQLQPVCNYVYKSKNMPKFIK.

This is an uncharacterized protein from Autographa californica nuclear polyhedrosis virus (AcMNPV).